The following is a 569-amino-acid chain: Laccase-14 (569 aa).

Residues 1 to 33 (MEFKLNIPNTIIKTLQTIVFFLFVLLAFQIAEA) form the signal peptide. Plastocyanin-like domains follow at residues 41-157 (KIKS…PKRG) and 167-320 (REIP…YKGD). N-linked (GlcNAc...) asparagine glycosylation is present at N87. Residues H91, H93, H136, and H138 each contribute to the Cu cation site. N-linked (GlcNAc...) asparagine glycans are attached at residues N190, N249, N336, N374, N395, N430, and N452. In terms of domain architecture, Plastocyanin-like 3 spans 420 to 553 (DFPRNPPTKF…NTVFIVKDGP (134 aa)). Residues H470, H473, H475, H532, C533, H534, H538, and M543 each coordinate Cu cation.

The protein belongs to the multicopper oxidase family. Requires Cu cation as cofactor. Expressed at low levels in flowers and siliques.

It localises to the secreted. Its subcellular location is the extracellular space. The protein localises to the apoplast. It carries out the reaction 4 hydroquinone + O2 = 4 benzosemiquinone + 2 H2O. Its function is as follows. Lignin degradation and detoxification of lignin-derived products. The chain is Laccase-14 (LAC14) from Arabidopsis thaliana (Mouse-ear cress).